Reading from the N-terminus, the 230-residue chain is Heptaprenylglyceryl phosphate synthase (230 aa).

Lys12 contributes to the sn-glycerol 1-phosphate binding site. 2 residues coordinate Mg(2+): Asp14 and Thr40. Sn-glycerol 1-phosphate contacts are provided by residues 159–164, Gly189, and 209–210; these read YIEYSG and GD.

The protein belongs to the GGGP/HepGP synthase family. Group I subfamily. As to quaternary structure, homodimer. Mg(2+) is required as a cofactor.

The catalysed reaction is sn-glycerol 1-phosphate + all-trans-heptaprenyl diphosphate = 3-heptaprenyl-sn-glycero-1-phosphate + diphosphate. It functions in the pathway membrane lipid metabolism; glycerophospholipid metabolism. In terms of biological role, prenyltransferase that catalyzes in vivo the transfer of the heptaprenyl moiety of heptaprenyl pyrophosphate (HepPP; 35 carbon atoms) to the C3 hydroxyl of sn-glycerol-1-phosphate (G1P), producing heptaprenylglyceryl phosphate (HepGP). This reaction is an ether-bond-formation step in the biosynthesis of archaea-type G1P-based membrane lipids found in Bacillales. In Staphylococcus aureus (strain USA300), this protein is Heptaprenylglyceryl phosphate synthase.